A 281-amino-acid chain; its full sequence is Ribosomal RNA large subunit methyltransferase J (281 aa).

S-adenosyl-L-methionine is bound by residues H19, H42, S101, E119, 144–145 (NG), and D165. D165 functions as the Proton acceptor in the catalytic mechanism.

The protein belongs to the RlmJ family. As to quaternary structure, monomer.

It carries out the reaction adenosine(2030) in 23S rRNA + S-adenosyl-L-methionine = N(6)-methyladenosine(2030) in 23S rRNA + S-adenosyl-L-homocysteine + H(+). Functionally, specifically methylates the adenine in position 2030 of 23S rRNA. The chain is Ribosomal RNA large subunit methyltransferase J from Haemophilus influenzae (strain ATCC 51907 / DSM 11121 / KW20 / Rd).